A 497-amino-acid polypeptide reads, in one-letter code: 4,4'-diaponeurosporene oxygenase (497 aa).

7–19 lines the FAD pocket; sequence VIGGGLGGISAAI.

Belongs to the carotenoid/retinoid oxidoreductase family. CrtP subfamily. The cofactor is FAD.

The enzyme catalyses all-trans-4,4'-diaponeurosporene + 2 AH2 + 2 O2 = 4,4'-diaponeurosporenal + 2 A + 3 H2O. Its pathway is carotenoid biosynthesis; staphyloxanthin biosynthesis; staphyloxanthin from farnesyl diphosphate: step 3/5. Its function is as follows. Involved in the biosynthesis of the yellow-orange carotenoid staphyloxanthin, which plays a role in the virulence via its protective function against oxidative stress. Catalyzes the oxidation of the terminal methyl side group of 4,4'-diaponeurosporene to form 4,4'-diaponeurosporen-4-al. The sequence is that of 4,4'-diaponeurosporene oxygenase from Staphylococcus aureus (strain bovine RF122 / ET3-1).